Reading from the N-terminus, the 228-residue chain is Octanoyltransferase (228 aa).

The BPL/LPL catalytic domain occupies 30–213 (NKVEDIMLLL…YFSRVFDFEP (184 aa)). Residues 75 to 82 (RGGDVTYH), 143 to 145 (AIG), and 156 to 158 (GFA) contribute to the substrate site. Catalysis depends on C174, which acts as the Acyl-thioester intermediate.

The protein belongs to the LipB family.

The protein resides in the cytoplasm. It catalyses the reaction octanoyl-[ACP] + L-lysyl-[protein] = N(6)-octanoyl-L-lysyl-[protein] + holo-[ACP] + H(+). Its pathway is protein modification; protein lipoylation via endogenous pathway; protein N(6)-(lipoyl)lysine from octanoyl-[acyl-carrier-protein]: step 1/2. Catalyzes the transfer of endogenously produced octanoic acid from octanoyl-acyl-carrier-protein onto the lipoyl domains of lipoate-dependent enzymes. Lipoyl-ACP can also act as a substrate although octanoyl-ACP is likely to be the physiological substrate. This is Octanoyltransferase from Desulforamulus reducens (strain ATCC BAA-1160 / DSM 100696 / MI-1) (Desulfotomaculum reducens).